Reading from the N-terminus, the 121-residue chain is Large ribosomal subunit protein uL14c (121 aa).

Belongs to the universal ribosomal protein uL14 family. As to quaternary structure, part of the 50S ribosomal subunit.

The protein resides in the plastid. It localises to the chloroplast. In terms of biological role, binds to 23S rRNA. This is Large ribosomal subunit protein uL14c from Phaeodactylum tricornutum (strain CCAP 1055/1).